The following is a 495-amino-acid chain: Carbohydrate oxidase (495 aa).

The first 22 residues, 1 to 22 (MRSAFILALGLITASADALVTR), serve as a signal peptide directing secretion. Positions 55-229 (LPYIPTAIAQ…AVWKLATFPA (175 aa)) constitute an FAD-binding PCMH-type domain. A cross-link (6-(S-cysteinyl)-8alpha-(pros-histidyl)-FAD (His-Cys)) is located at residues 92-154 (HSYASFGFGG…YGRAISHGTC (63 aa)). N-linked (GlcNAc...) asparagine glycosylation is found at Asn-244 and Asn-417.

It belongs to the oxygen-dependent FAD-linked oxidoreductase family. Requires FAD as cofactor. In terms of processing, the FAD cofactor is bound via a bicovalent 6-S-cysteinyl, 8alpha-N1-histidyl FAD linkage.

It is found in the secreted. The enzyme catalyses beta-D-glucose + O2 = D-glucono-1,5-lactone + H2O2. It catalyses the reaction D-galactose + O2 = D-galactono-1,5-lactone + H2O2. It carries out the reaction D-cellobiose + O2 = D-cellobiono-1,5-lactone + H2O2. The catalysed reaction is beta-lactose + O2 = lactobiono-1,5-lactone + H2O2. The enzyme catalyses D-maltose + O2 = D-maltobiono-1,5-lactone + H2O2. It catalyses the reaction D-xylose + O2 = D-xylono-1,5-lactone + H2O2. In terms of biological role, catalyzes the selective oxidation of C1 hydroxyl moieties on mono-, oligo- and polysaccharides with concomitant reduction of molecular oxygen to hydrogen peroxide. This results in the formation of the corresponding lactones, which typically undergo spontaneous hydrolysis. Carbohydrate oxidase is able to oxidize a variety of substrates including D-glucose, D-galactose, D-xylose, D-maltose, D-cellobiose, and lactose. In addition, among various oligosaccharides, the enzyme preferred tetrameric dextrins, indicating a favorable interaction of four linked glucose units with the substrate binding pocket. This is Carbohydrate oxidase from Microdochium nivale (Pink snow mold).